We begin with the raw amino-acid sequence, 375 residues long: Putative prophage phiRv2 integrase (375 aa).

A Core-binding (CB) domain is found at 75 to 153; sequence APFGEYAEGW…LLRAIMQTAL (79 aa). One can recognise a Tyr recombinase domain in the interval 175–364; the sequence is HKIRPATLDE…AKGRDREIAA (190 aa). Residues R209, H316, R319, and H342 contribute to the active site. The O-(3'-phospho-DNA)-tyrosine intermediate role is filled by Y351.

This sequence belongs to the 'phage' integrase family.

Integrase is necessary for integration of the phage into the host genome by site-specific recombination. In conjunction with excisionase, integrase is also necessary for excision of the prophage from the host genome. This chain is Putative prophage phiRv2 integrase, found in Mycobacterium tuberculosis (strain CDC 1551 / Oshkosh).